Here is a 378-residue protein sequence, read N- to C-terminus: Phospho-N-acetylmuramoyl-pentapeptide-transferase (378 aa).

The next 10 helical transmembrane spans lie at 27–47 (TAFA…WLIN), 74–94 (TMGG…WADL), 96–116 (YPYV…GFLD), 135–155 (LVYQ…MRAY), 184–204 (WTYV…VVFY), 216–236 (GLAI…AYAG), 256–276 (LTIF…YNAH), 280–300 (IFMG…VAVL), 305–325 (ILLL…ILQV), and 355–375 (KIIA…LTTL).

Belongs to the glycosyltransferase 4 family. MraY subfamily. Requires Mg(2+) as cofactor.

The protein localises to the cell inner membrane. It carries out the reaction UDP-N-acetyl-alpha-D-muramoyl-L-alanyl-gamma-D-glutamyl-meso-2,6-diaminopimeloyl-D-alanyl-D-alanine + di-trans,octa-cis-undecaprenyl phosphate = di-trans,octa-cis-undecaprenyl diphospho-N-acetyl-alpha-D-muramoyl-L-alanyl-D-glutamyl-meso-2,6-diaminopimeloyl-D-alanyl-D-alanine + UMP. It participates in cell wall biogenesis; peptidoglycan biosynthesis. Functionally, catalyzes the initial step of the lipid cycle reactions in the biosynthesis of the cell wall peptidoglycan: transfers peptidoglycan precursor phospho-MurNAc-pentapeptide from UDP-MurNAc-pentapeptide onto the lipid carrier undecaprenyl phosphate, yielding undecaprenyl-pyrophosphoryl-MurNAc-pentapeptide, known as lipid I. The polypeptide is Phospho-N-acetylmuramoyl-pentapeptide-transferase (Solibacter usitatus (strain Ellin6076)).